Consider the following 144-residue polypeptide: Mediator of RNA polymerase II transcription subunit 9 (144 aa).

Residues 85 to 143 (QDCNHKIFELQKRFESAREQIRQLPGIDFNKEEQQQRLELLRNQLKLKQQLIRKYKDTE) are a coiled coil.

Belongs to the Mediator complex subunit 9 family. In terms of assembly, component of the Mediator complex.

Its subcellular location is the nucleus. In terms of biological role, component of the Mediator complex, a coactivator involved in the regulated transcription of nearly all RNA polymerase II-dependent genes. Mediator functions as a bridge to convey information from gene-specific regulatory proteins to the basal RNA polymerase II transcription machinery. Mediator is recruited to promoters by direct interactions with regulatory proteins and serves as a scaffold for the assembly of a functional preinitiation complex with RNA polymerase II and the general transcription factors. The protein is Mediator of RNA polymerase II transcription subunit 9 (MED9) of Drosophila melanogaster (Fruit fly).